The chain runs to 929 residues: Diacylglycerol kinase zeta (929 aa).

Residues 1 to 14 (MEPRDPSPEARSSD) are compositionally biased toward basic and acidic residues. Disordered stretches follow at residues 1–46 (MEPR…RRFP) and 59–80 (KSGLQHLAPPPPTPGAPCGESE). Residues 15–24 (SESASASSSG) are compositionally biased toward low complexity. Residues 25-37 (SERDADPEPDKAP) are compositionally biased toward basic and acidic residues. Phorbol-ester/DAG-type zinc fingers lie at residues 98-153 (HIWF…NFRC) and 173-231 (HHWV…EEPC). The disordered stretch occupies residues 257-281 (KASKKKKRASFKRRSSKKGPEEGRW). The span at 258–273 (ASKKKKRASFKRRSSK) shows a compositional bias: basic residues. A mediates interaction with RASGRP1 region spans residues 279 to 417 (GRWRPFIIRP…HVEEGNVVQL (139 aa)). The region spanning 292 to 426 (PLMKPLLVFV…LDRWDLRAEP (135 aa)) is the DAGKc domain. A Nuclear export signal motif is present at residues 362-370 (LSTLDQLRL). Positions 421–441 (DLRAEPNPEAGPEERDDGATD) are disordered. At Ser-706 the chain carries Phosphoserine. Residues 760–783 (ARPDLPTPTSPLPASPCSPTPGSL) are disordered. The segment covering 764 to 778 (LPTPTSPLPASPCSP) has biased composition (pro residues). A Phosphoserine modification is found at Ser-782. ANK repeat units lie at residues 823–853 (QSRTLLHHAVSTGSKEVVRYLLDHAPPEILD) and 858–887 (NGETCLHQAAALGQRTICHYIVEAGASLMK). The PDZ-binding signature appears at 925–929 (QETAV).

This sequence belongs to the eukaryotic diacylglycerol kinase family. Interacts (via PDZ-binding motif) with the PDZ domain of the syntrophin SNTG1 and that of SNX27. Interacts with IRS1 in the absence of insulin; insulin stimulation decreases this interaction. Found in a ternary complex with IRS1 and PIP5K1A in the absence of insulin. Interacts with PIP5K1A. Forms a signaling complex with RASGRP1 and HRAS.

It localises to the nucleus. The protein resides in the cytoplasm. The protein localises to the cytosol. Its subcellular location is the cell membrane. It is found in the cell projection. It localises to the lamellipodium. It carries out the reaction a 1,2-diacyl-sn-glycerol + ATP = a 1,2-diacyl-sn-glycero-3-phosphate + ADP + H(+). It catalyses the reaction a 1-O-alkyl-sn-glycerol + ATP = a 1-O-alkyl-sn-glycero-3-phosphate + ADP + H(+). The catalysed reaction is 1-O-alkyl-2-acyl-sn-glycerol + ATP = 1-O-alkyl-2-acyl-sn-glycero-3-phosphate + ADP + H(+). The enzyme catalyses 1,2-didecanoyl-sn-glycerol + ATP = 1,2-didecanoyl-sn-glycero-3-phosphate + ADP + H(+). It carries out the reaction 1,2-ditetradecanoyl-sn-glycerol + ATP = 1,2-ditetradecanoyl-sn-glycero-3-phosphate + ADP + H(+). It catalyses the reaction 1-hexadecanoyl-2-(9Z-octadecenoyl)-sn-glycerol + ATP = 1-hexadecanoyl-2-(9Z-octadecenoyl)-sn-glycero-3-phosphate + ADP + H(+). The catalysed reaction is 1-hexadecanoyl-2-(5Z,8Z,11Z,14Z-eicosatetraenoyl)-sn-glycerol + ATP = 1-hexadecanoyl-2-(5Z,8Z,11Z,14Z-eicosatetraenoyl)-sn-glycero-3-phosphate + ADP + H(+). The enzyme catalyses 1-octadecanoyl-2-(9Z-octadecenoyl)-sn-glycerol + ATP = 1-octadecanoyl-2-(9Z-octadecenoyl)-sn-glycero-3-phosphate + ADP + H(+). It carries out the reaction 1-octadecanoyl-2-(5Z,8Z,11Z,14Z-eicosatetraenoyl)-sn-glycerol + ATP = 1-octadecanoyl-2-(5Z,8Z,11Z,14Z-eicosatetraenoyl)-sn-glycero-3-phosphate + ADP + H(+). It catalyses the reaction 1-octadecanoyl-2-(4Z,7Z,10Z,13Z,16Z,19Z-docosahexaenoyl)-sn-glycerol + ATP = 1-octadecanoyl-2-(4Z,7Z,10Z,13Z,16Z,19Z-docosahexaenoyl)-sn-glycero-3-phosphate + ADP + H(+). The catalysed reaction is 1,2-di-(9Z-octadecenoyl)-sn-glycerol + ATP = 1,2-di-(9Z-octadecenoyl)-sn-glycero-3-phosphate + ADP + H(+). The enzyme catalyses 1-(9Z-octadecenoyl)-2-hexadecanoyl-sn-glycerol + ATP = 1-(9Z)-octadecenoyl-2-hexadecanoyl-sn-glycero-3-phosphate + ADP + H(+). It carries out the reaction 1-eicosanoyl-2-(5Z,8Z,11Z,14Z)-eicosatetraenoyl-sn-glycerol + ATP = 1-eicosanoyl-2-(5Z,8Z,11Z,14Z)-eicosatetraenoyl-sn-glycero-3-phosphate + ADP + H(+). It catalyses the reaction 1,2-di-(5Z,8Z,11Z,14Z)-eicosatetraenoyl-sn-glycerol + ATP = 1,2-di-(5Z,8Z,11Z,14Z)-eicosatetraenoyl-sn-glycero-3-phosphate + ADP + H(+). The catalysed reaction is 1-O-hexadecyl-2-acetyl-sn-glycerol + ATP = 1-O-hexadecyl-2-acetyl-sn-glycero-3-phosphate + ADP + H(+). The enzyme catalyses 1-O-hexadecyl-2-(5Z,8Z,11Z,14Z-eicosatetraenoyl)-sn-glycerol + ATP = 1-O-hexadecyl-2-(5Z,8Z,11Z,14Z-eicosatetraenoyl)-sn-glycero-3-phosphate + ADP + H(+). It carries out the reaction 1-O-hexadecyl-2-(9Z-octadecenoyl)-sn-glycerol + ATP = 1-O-hexadecyl-2-(9Z-octadecenoyl)-sn-glycero-3-phosphate + ADP + H(+). It catalyses the reaction 1-O-hexadecyl-sn-glycerol + ATP = 1-O-hexadecyl-sn-glycero-3-phosphate + ADP + H(+). It functions in the pathway lipid metabolism; glycerolipid metabolism. Its function is as follows. Diacylglycerol kinase that converts diacylglycerol/DAG into phosphatidic acid/phosphatidate/PA and regulates the respective levels of these two bioactive lipids. Thereby, acts as a central switch between the signaling pathways activated by these second messengers with different cellular targets and opposite effects in numerous biological processes. Also plays an important role in the biosynthesis of complex lipids. Does not exhibit an acyl chain-dependent substrate specificity among diacylglycerol species. Can also phosphorylate 1-alkyl-2-acylglycerol in vitro but less efficiently and with a preference for alkylacylglycerols containing an arachidonoyl group. The biological processes it is involved in include T cell activation since it negatively regulates T-cell receptor signaling which is in part mediated by diacylglycerol. By generating phosphatidic acid, stimulates PIP5KIA activity which regulates actin polymerization. Through the same mechanism could also positively regulate insulin-induced translocation of SLC2A4 to the cell membrane. Regulates RASGRP1 activity. This chain is Diacylglycerol kinase zeta, found in Rattus norvegicus (Rat).